The chain runs to 66 residues: Transmembrane protein B66L (66 aa).

The first 20 residues, 1 to 20 (MDIKRALILFLLFLVVLSNA), serve as a signal peptide directing secretion. Over 21-40 (FVDYIISNFNHAVTCRKPTY) the chain is Extracellular. The chain crosses the membrane as a helical span at residues 41-61 (FGIVLQGIFLVILFSIVDYLI). Topologically, residues 62–66 (NENIL) are cytoplasmic.

Belongs to the asfivirus B66L family.

It localises to the host membrane. The protein is Transmembrane protein B66L of Ornithodoros (relapsing fever ticks).